A 192-amino-acid chain; its full sequence is Spermatogenesis-associated protein 3 (192 aa).

Positions 1 to 15 (MKKVKKKRSEARRHR) are enriched in basic residues. Disordered regions lie at residues 1-65 (MKKV…TTSR) and 161-184 (SRKP…GSGG). Positions 19–59 (SQHASSNSTSQQPSPESTPQQPSPESTPQQPSPESTPQHSS) are enriched in low complexity.

It localises to the cell projection. The protein localises to the cilium. Its subcellular location is the flagellum. The protein is Spermatogenesis-associated protein 3 (SPATA3) of Homo sapiens (Human).